We begin with the raw amino-acid sequence, 630 residues long: Biosynthetic arginine decarboxylase (630 aa).

Lysine 99 is modified (N6-(pyridoxal phosphate)lysine). Residue 281-291 (VDIGGGLGVDY) coordinates substrate.

It belongs to the Orn/Lys/Arg decarboxylase class-II family. SpeA subfamily. The cofactor is Mg(2+). Pyridoxal 5'-phosphate is required as a cofactor.

The catalysed reaction is L-arginine + H(+) = agmatine + CO2. It functions in the pathway amine and polyamine biosynthesis; agmatine biosynthesis; agmatine from L-arginine: step 1/1. In terms of biological role, catalyzes the biosynthesis of agmatine from arginine. The protein is Biosynthetic arginine decarboxylase of Phocaeicola vulgatus (strain ATCC 8482 / DSM 1447 / JCM 5826 / CCUG 4940 / NBRC 14291 / NCTC 11154) (Bacteroides vulgatus).